Reading from the N-terminus, the 500-residue chain is NAD(P)H-quinone oxidoreductase chain 4, chloroplastic (500 aa).

The next 14 helical transmembrane spans lie at 4–24 (FPWLTIIVVFPIFAGSLIFFL), 35–55 (YTICICILELLLTTYAFCYHF), 87–107 (IGPILLTGFITTLATLAAWPI), 113–130 (LFHFLMLAMYSGQIGSFS), 134–154 (LLLFFIMWELELIPVYLLLCM), 167–187 (FILYTAGGSVFLLMGVLGVAL), 208–228 (VLEIIFYIGFFIAFAVKSPII), 242–262 (HYSTCMLLAGILLKMGAYGLI), 272–292 (AHSIFSPWLMIIGTIQIIYAA), 305–325 (IAYSSVSHMGFIIIGISSLTD), 330–350 (GALLQIISHGFIGAALFFLAG), 386–406 (LALPGMSGFVAELIVFFGIIT), 411–431 (LLIPKILITFVMAIGMILTPI), and 462–482 (LFLSISIFLPVIGIGIYPDFV).

This sequence belongs to the complex I subunit 4 family.

Its subcellular location is the plastid. The protein localises to the chloroplast thylakoid membrane. It catalyses the reaction a plastoquinone + NADH + (n+1) H(+)(in) = a plastoquinol + NAD(+) + n H(+)(out). The enzyme catalyses a plastoquinone + NADPH + (n+1) H(+)(in) = a plastoquinol + NADP(+) + n H(+)(out). The chain is NAD(P)H-quinone oxidoreductase chain 4, chloroplastic from Nicotiana tomentosiformis (Tobacco).